The following is a 595-amino-acid chain: MGDKPTLVTLLTVAVSSPPPSSPLPLVSFTELLLPPPSVAAAAVAATATSEVGEKTAEQEVAAAGPETRNERRENREDEGGETRTTGTTAVKRSHDGIPRQLAERLRLCRHMDPEQDYRLPAQDVVTSWIEALRDADRDNYGRCVRHAKIHRSASHLTAYESYLVSITEQYNTASNVTEKASYVQGCIFLSFPVIYNNTQGCGYKYDWSNVVTPKAAYAELFFLLCSTSESSVVLQPLITKGGLCSSMAVYDEETMRQSQAVQIGFLHTQLVMVPFVPHACPHYAVPFTTPGKPGCGGAPSGVAGLEETAPFGRVSVTRHGATLLCRVDHLTWISKRVTTYGHKKITRYLAQFRGTMDDDEAALPGEDEAWIASKNVQYEFMGLIFTVNVDSLCVDAEQRQLLGTVATSFCHRVSDKITARNMPRAFSFYLLTSAQRGYDLRFSRNPSLFFSGDALNCPLLNEPNVFSLTVHAPYDIHFGVQPRQTVELDLRYVQITDRCFLVANLPHEDAFYTGLSVWRGGEPLKVTLWTRTRSIVIPQGTPIATLYQITEGDGNVYSYNHHTVFRQMHAAGATTFFLGDMQLPADNFLTSPHP.

Positions 1-40 (MGDKPTLVTLLTVAVSSPPPSSPLPLVSFTELLLPPPSVA) are cleaved as a signal peptide. The segment at 47-94 (TATSEVGEKTAEQEVAAAGPETRNERRENREDEGGETRTTGTTAVKRS) is disordered. Over residues 68 to 82 (TRNERRENREDEGGE) the composition is skewed to basic and acidic residues.

Belongs to the herpesviridae U10 family. Interacts with host CGAS.

The protein resides in the host cytoplasm. It is found in the host nucleus. In terms of biological role, plays a role in the inhibition of host innate immune system by targeting host CGAS and promoting dissociation of DNA from CGAS, thereby inhibiting the enzymatic activity of CGAS. The protein is Protein UL31 (UL31) of Human cytomegalovirus (strain Merlin) (HHV-5).